A 203-amino-acid chain; its full sequence is Small ribosomal subunit protein uS4c (203 aa).

Positions 91-159 (MRLDNIIFRL…ISKNIEFYQK (69 aa)) constitute an S4 RNA-binding domain.

It belongs to the universal ribosomal protein uS4 family. Part of the 30S ribosomal subunit. Contacts protein S5. The interaction surface between S4 and S5 is involved in control of translational fidelity.

The protein resides in the plastid. The protein localises to the chloroplast. One of the primary rRNA binding proteins, it binds directly to 16S rRNA where it nucleates assembly of the body of the 30S subunit. In terms of biological role, with S5 and S12 plays an important role in translational accuracy. In Lopidium concinnum (Moss), this protein is Small ribosomal subunit protein uS4c (rps4).